Reading from the N-terminus, the 511-residue chain is Phospho-2-dehydro-3-deoxyheptonate aldolase 2, chloroplastic (511 aa).

It belongs to the class-II DAHP synthase family. As to expression, leaves, stems, tuber and roots.

It is found in the plastid. The protein localises to the chloroplast. The enzyme catalyses D-erythrose 4-phosphate + phosphoenolpyruvate + H2O = 7-phospho-2-dehydro-3-deoxy-D-arabino-heptonate + phosphate. It functions in the pathway metabolic intermediate biosynthesis; chorismate biosynthesis; chorismate from D-erythrose 4-phosphate and phosphoenolpyruvate: step 1/7. The polypeptide is Phospho-2-dehydro-3-deoxyheptonate aldolase 2, chloroplastic (SHKB) (Solanum tuberosum (Potato)).